Here is a 326-residue protein sequence, read N- to C-terminus: WRKY transcription factor 8 (326 aa).

Positions 115 to 172 are disordered; it reads VRVSASPSSSEADHHPGEDSGKIRKKREVRDGGEDDQRSQKVVKTKKKEEKKKEPRVS. 2 stretches are compositionally biased toward basic and acidic residues: residues 125-153 and 161-170; these read EADH…DQRS and KKEEKKKEPR. A DNA-binding region (WRKY) is located at residues 177-242; the sequence is TEVDHLEDGY…YESQHNHPIP (66 aa).

The protein belongs to the WRKY group II-c family. As to quaternary structure, interacts with VQ9 (via N-terminus). Highly expressed in roots and at lower levels in rosette leaves, cauline leaves, stems, flowers and siliques.

It localises to the nucleus. Its function is as follows. Transcription factor. Interacts specifically with the W box (5'-TTGAC[CT]-3'), a frequently occurring stress-responsive cis-acting element. Functions as a positive regulator of salt stress response. Binds the W box of LTI78/RD29A stress-response gene and directly regulates its transcription under salt stress. Functions antagonistically with VQ9 to regulate sodium and potassium homeostasis under salt stress by regulating the expression of downstream SOS (SALT OVERLY SENSITIVE) stress-responsive genes. The DNA-binding activity of WRKY8 is decreased by VQ9. Functions as a negative regulator of basal resistance to the bacterial pathogen P.syringae and as positive regulator of resistance to the fungal pathogen to B.cinerea. Functions as a positive regulator of defense response againt tobamovirus (TMV) by regulating both the abscisic acid and ethylene signaling pathways. Positively regulates ABI4 expression and negatively modulates ACS6 and ERF104 expression by directly binding to the W box consensus motifs within their promoters. This Arabidopsis thaliana (Mouse-ear cress) protein is WRKY transcription factor 8 (WRKY8).